The chain runs to 137 residues: Large ribosomal subunit protein uL16 (137 aa).

This sequence belongs to the universal ribosomal protein uL16 family. In terms of assembly, part of the 50S ribosomal subunit.

Binds 23S rRNA and is also seen to make contacts with the A and possibly P site tRNAs. The polypeptide is Large ribosomal subunit protein uL16 (Afipia carboxidovorans (strain ATCC 49405 / DSM 1227 / KCTC 32145 / OM5) (Oligotropha carboxidovorans)).